Here is a 113-residue protein sequence, read N- to C-terminus: MQVKAEARYIRVSPQKARLVVDLIRGQQAGKALTTLRTTNKRIAPTVEKVLQSAIANATNRNENVDVDQLFVTEAYVNEGPRMKRVRPAPMGRAYRYQRRLAHIVIKVTEKEA.

This sequence belongs to the universal ribosomal protein uL22 family. In terms of assembly, part of the 50S ribosomal subunit.

In terms of biological role, this protein binds specifically to 23S rRNA; its binding is stimulated by other ribosomal proteins, e.g. L4, L17, and L20. It is important during the early stages of 50S assembly. It makes multiple contacts with different domains of the 23S rRNA in the assembled 50S subunit and ribosome. Functionally, the globular domain of the protein is located near the polypeptide exit tunnel on the outside of the subunit, while an extended beta-hairpin is found that lines the wall of the exit tunnel in the center of the 70S ribosome. This Solibacter usitatus (strain Ellin6076) protein is Large ribosomal subunit protein uL22.